A 396-amino-acid chain; its full sequence is Ornithine aminotransferase (396 aa).

K255 bears the N6-(pyridoxal phosphate)lysine mark.

Belongs to the class-III pyridoxal-phosphate-dependent aminotransferase family. OAT subfamily. Pyridoxal 5'-phosphate serves as cofactor.

It is found in the cytoplasm. The catalysed reaction is a 2-oxocarboxylate + L-ornithine = L-glutamate 5-semialdehyde + an L-alpha-amino acid. It functions in the pathway amino-acid biosynthesis; L-proline biosynthesis; L-glutamate 5-semialdehyde from L-ornithine: step 1/1. In terms of biological role, catalyzes the interconversion of ornithine to glutamate semialdehyde. In Bacillus cereus (strain 03BB102), this protein is Ornithine aminotransferase.